The following is a 357-amino-acid chain: AA9 family lytic polysaccharide monooxygenase B (357 aa).

Positions 1-18 (MKFSSVLALAASAKLVAS) are cleaved as a signal peptide. Residues H19 and H101 each contribute to the Cu(2+) site. The tract at residues 19–234 (HATVFAVWIN…IPGPAVWDGA (216 aa)) is catalytic. C61 and C182 form a disulfide bridge. H168 and Q177 together coordinate O2. A Cu(2+)-binding site is contributed by Y179. A ser/Thr-rich linker region spans residues 235–318 (SSGSGSSGSG…SAAPTGGTGT (84 aa)). The segment at 292 to 317 (SVRPTTSAAPTTSAPTSSAAPTGGTG) is disordered. Low complexity predominate over residues 295 to 313 (PTTSAAPTTSAPTSSAAPT). One can recognise a CBM1 domain in the interval 319-355 (GSIQIYQQCGGMNYKGATGCASGLTCKQWNPYYHQCV).

This sequence belongs to the polysaccharide monooxygenase AA9 family. It depends on Cu(2+) as a cofactor.

It is found in the secreted. The enzyme catalyses [(1-&gt;4)-beta-D-glucosyl]n+m + reduced acceptor + O2 = 4-dehydro-beta-D-glucosyl-[(1-&gt;4)-beta-D-glucosyl]n-1 + [(1-&gt;4)-beta-D-glucosyl]m + acceptor + H2O.. Lytic polysaccharide monooxygenase (LPMO) that depolymerizes crystalline and amorphous polysaccharides via the oxidation of scissile alpha- or beta-(1-4)-glycosidic bonds, yielding C4 oxidation products. Catalysis by LPMOs requires the reduction of the active-site copper from Cu(II) to Cu(I) by a reducing agent and H(2)O(2) or O(2) as a cosubstrate. Active on carboxymethylcellulose (CMC), hydroxyethylcellulose (HEC) and beta-glucan. Also active on soluble cellohexaose, a property that is restricted to only a few characterized LPMOs. The protein is AA9 family lytic polysaccharide monooxygenase B of Emericella nidulans (strain FGSC A4 / ATCC 38163 / CBS 112.46 / NRRL 194 / M139) (Aspergillus nidulans).